Here is a 413-residue protein sequence, read N- to C-terminus: Aspartate aminotransferase, cytoplasmic (413 aa).

L-aspartate-binding residues include Gly-39, Trp-141, and Asn-195. Lys-259 is modified (N6-(pyridoxal phosphate)lysine). Position 387 (Arg-387) interacts with L-aspartate.

This sequence belongs to the class-I pyridoxal-phosphate-dependent aminotransferase family. In terms of assembly, homodimer. Pyridoxal 5'-phosphate is required as a cofactor.

It is found in the cytoplasm. The catalysed reaction is L-aspartate + 2-oxoglutarate = oxaloacetate + L-glutamate. The enzyme catalyses L-cysteine + 2-oxoglutarate = 2-oxo-3-sulfanylpropanoate + L-glutamate. It catalyses the reaction (2S)-2-aminobutanoate + 2-oxoglutarate = 2-oxobutanoate + L-glutamate. It carries out the reaction 3-sulfino-L-alanine + 2-oxoglutarate = 3-sulfinopyruvate + L-glutamate. Its function is as follows. Biosynthesis of L-glutamate from L-aspartate or L-cysteine. Important regulator of levels of glutamate, the major excitatory neurotransmitter of the vertebrate central nervous system. Acts as a scavenger of glutamate in brain neuroprotection. The aspartate aminotransferase activity is involved in hepatic glucose synthesis during development and in adipocyte glyceroneogenesis. Using L-cysteine as substrate, regulates levels of mercaptopyruvate, an important source of hydrogen sulfide. Mercaptopyruvate is converted into H(2)S via the action of 3-mercaptopyruvate sulfurtransferase (3MST). Hydrogen sulfide is an important synaptic modulator and neuroprotectant in the brain. The sequence is that of Aspartate aminotransferase, cytoplasmic from Bos taurus (Bovine).